The primary structure comprises 310 residues: NAD-dependent protein deacylase sirtuin-5, mitochondrial (310 aa).

Residues 1-36 (MQPLQIAPCRLLYGLYRGLKSPASTGTRICPAMARP) constitute a mitochondrion transit peptide. The region spanning 37–307 (SSNMADFRKL…PEALAPHETG (271 aa)) is the Deacetylase sirtuin-type domain. 58–77 (GAGVSAESGVPTFRGAGGYW) is a binding site for NAD(+). Substrate-binding residues include Tyr-102 and Arg-105. Residue 140–143 (QNID) coordinates NAD(+). The active-site Proton acceptor is the His-158. Residues Cys-166, Cys-169, Cys-207, and Cys-212 each contribute to the Zn(2+) site. NAD(+) contacts are provided by residues 249-251 (GTS), 275-277 (NME), and Cys-293.

Belongs to the sirtuin family. Class III subfamily. In terms of assembly, monomer. Homodimer. Interacts with CPS1. Interacts with PCCA. It depends on Zn(2+) as a cofactor.

It localises to the mitochondrion. The protein localises to the cytoplasm. The protein resides in the cytosol. It is found in the nucleus. The catalysed reaction is N(6)-malonyl-L-lysyl-[protein] + NAD(+) + H2O = 2''-O-malonyl-ADP-D-ribose + nicotinamide + L-lysyl-[protein]. It catalyses the reaction N(6)-succinyl-L-lysyl-[protein] + NAD(+) + H2O = 2''-O-succinyl-ADP-D-ribose + nicotinamide + L-lysyl-[protein]. The enzyme catalyses N(6)-glutaryl-L-lysyl-[protein] + NAD(+) + H2O = 2''-O-glutaryl-ADP-D-ribose + nicotinamide + L-lysyl-[protein]. Its function is as follows. NAD-dependent lysine demalonylase, desuccinylase and deglutarylase that specifically removes malonyl, succinyl and glutaryl groups on target proteins. Activates CPS1 and contributes to the regulation of blood ammonia levels during prolonged fasting: acts by mediating desuccinylation and deglutarylation of CPS1, thereby increasing CPS1 activity in response to elevated NAD levels during fasting. Activates SOD1 by mediating its desuccinylation, leading to reduced reactive oxygen species. Activates SHMT2 by mediating its desuccinylation. Modulates ketogenesis through the desuccinylation and activation of HMGCS2. Has weak NAD-dependent protein deacetylase activity; however this activity may not be physiologically relevant in vivo. Can deacetylate cytochrome c (CYCS) and a number of other proteins in vitro such as UOX. This chain is NAD-dependent protein deacylase sirtuin-5, mitochondrial, found in Canis lupus familiaris (Dog).